The sequence spans 277 residues: Diaminopimelate epimerase (277 aa).

Substrate is bound by residues asparagine 13, glutamine 46, and asparagine 66. The Proton donor role is filled by cysteine 75. Residues 76-77 (GN), asparagine 160, asparagine 193, and 211-212 (ER) contribute to the substrate site. The Proton acceptor role is filled by cysteine 220. Substrate is bound at residue 221-222 (GS).

It belongs to the diaminopimelate epimerase family. Homodimer.

It is found in the cytoplasm. The catalysed reaction is (2S,6S)-2,6-diaminopimelate = meso-2,6-diaminopimelate. It functions in the pathway amino-acid biosynthesis; L-lysine biosynthesis via DAP pathway; DL-2,6-diaminopimelate from LL-2,6-diaminopimelate: step 1/1. Catalyzes the stereoinversion of LL-2,6-diaminopimelate (L,L-DAP) to meso-diaminopimelate (meso-DAP), a precursor of L-lysine and an essential component of the bacterial peptidoglycan. This chain is Diaminopimelate epimerase, found in Legionella pneumophila (strain Paris).